The sequence spans 138 residues: Nucleoside diphosphate kinase (138 aa).

Residues Lys-11, Phe-59, Arg-87, Thr-93, Arg-104, and Asn-114 each coordinate ATP. The Pros-phosphohistidine intermediate role is filled by His-117.

The protein belongs to the NDK family. It depends on Mg(2+) as a cofactor.

The protein resides in the cytoplasm. It carries out the reaction a 2'-deoxyribonucleoside 5'-diphosphate + ATP = a 2'-deoxyribonucleoside 5'-triphosphate + ADP. The catalysed reaction is a ribonucleoside 5'-diphosphate + ATP = a ribonucleoside 5'-triphosphate + ADP. Major role in the synthesis of nucleoside triphosphates other than ATP. The ATP gamma phosphate is transferred to the NDP beta phosphate via a ping-pong mechanism, using a phosphorylated active-site intermediate. The polypeptide is Nucleoside diphosphate kinase (Saccharolobus solfataricus (strain ATCC 35092 / DSM 1617 / JCM 11322 / P2) (Sulfolobus solfataricus)).